The primary structure comprises 735 residues: Ion-translocating oxidoreductase complex subunit C (735 aa).

4Fe-4S ferredoxin-type domains are found at residues 368–397 (MGAP…QQLY) and 407–436 (KATA…VQYF). 8 residues coordinate [4Fe-4S] cluster: C377, C380, C383, C387, C416, C419, C422, and C426. Residues 534 to 711 (QARAKQAAHP…EPVEPADPRK (178 aa)) form a disordered region.

It belongs to the 4Fe4S bacterial-type ferredoxin family. RnfC subfamily. The complex is composed of six subunits: RsxA, RsxB, RsxC, RsxD, RsxE and RsxG. It depends on [4Fe-4S] cluster as a cofactor.

The protein localises to the cell inner membrane. Functionally, part of a membrane-bound complex that couples electron transfer with translocation of ions across the membrane. Required to maintain the reduced state of SoxR. This Salmonella paratyphi A (strain ATCC 9150 / SARB42) protein is Ion-translocating oxidoreductase complex subunit C.